The sequence spans 239 residues: 1-(5-phosphoribosyl)-5-[(5-phosphoribosylamino)methylideneamino] imidazole-4-carboxamide isomerase (239 aa).

D8 (proton acceptor) is an active-site residue. The Proton donor role is filled by D130.

This sequence belongs to the HisA/HisF family.

The protein resides in the cytoplasm. It catalyses the reaction 1-(5-phospho-beta-D-ribosyl)-5-[(5-phospho-beta-D-ribosylamino)methylideneamino]imidazole-4-carboxamide = 5-[(5-phospho-1-deoxy-D-ribulos-1-ylimino)methylamino]-1-(5-phospho-beta-D-ribosyl)imidazole-4-carboxamide. Its pathway is amino-acid biosynthesis; L-histidine biosynthesis; L-histidine from 5-phospho-alpha-D-ribose 1-diphosphate: step 4/9. This chain is 1-(5-phosphoribosyl)-5-[(5-phosphoribosylamino)methylideneamino] imidazole-4-carboxamide isomerase, found in Lachnoclostridium phytofermentans (strain ATCC 700394 / DSM 18823 / ISDg) (Clostridium phytofermentans).